Reading from the N-terminus, the 483-residue chain is Glutamyl-tRNA(Gln) amidotransferase subunit A (483 aa).

Active-site charge relay system residues include Lys76 and Ser151. The Acyl-ester intermediate role is filled by Ser175.

This sequence belongs to the amidase family. GatA subfamily. Heterotrimer of A, B and C subunits.

The enzyme catalyses L-glutamyl-tRNA(Gln) + L-glutamine + ATP + H2O = L-glutaminyl-tRNA(Gln) + L-glutamate + ADP + phosphate + H(+). Allows the formation of correctly charged Gln-tRNA(Gln) through the transamidation of misacylated Glu-tRNA(Gln) in organisms which lack glutaminyl-tRNA synthetase. The reaction takes place in the presence of glutamine and ATP through an activated gamma-phospho-Glu-tRNA(Gln). In Pseudomonas savastanoi pv. phaseolicola (strain 1448A / Race 6) (Pseudomonas syringae pv. phaseolicola (strain 1448A / Race 6)), this protein is Glutamyl-tRNA(Gln) amidotransferase subunit A.